The following is a 206-amino-acid chain: Probable N-acetyltransferase 14 (206 aa).

Residues 55 to 206 (LRFVLASFAL…TLVREFSKDL (152 aa)) enclose the N-acetyltransferase domain. A helical transmembrane segment spans residues 57–77 (FVLASFALALLLPVFLAVTAV).

Belongs to the camello family.

The protein localises to the membrane. Probable acetyltransferase. In terms of biological role, may act as a transcription factor regulating the expression of coproporphyrinogen oxidase by binding to a promoter regulatory element. This Macaca fascicularis (Crab-eating macaque) protein is Probable N-acetyltransferase 14 (NAT14).